Reading from the N-terminus, the 356-residue chain is D-alanine--D-alanine ligase (356 aa).

Residues 134–339 (KQLFAHRGLP…YADLITKLIE (206 aa)) enclose the ATP-grasp domain. An ATP-binding site is contributed by 167 to 222 (KDKLEFPVFVKPANLGSSVGISKCNNEEELKSGIEEAFQFDRKLVIEQGIEAREIE). Mg(2+) is bound by residues Asp293, Glu306, and Asn308.

This sequence belongs to the D-alanine--D-alanine ligase family. Mg(2+) serves as cofactor. Mn(2+) is required as a cofactor.

It is found in the cytoplasm. It carries out the reaction 2 D-alanine + ATP = D-alanyl-D-alanine + ADP + phosphate + H(+). It functions in the pathway cell wall biogenesis; peptidoglycan biosynthesis. In terms of biological role, cell wall formation. The protein is D-alanine--D-alanine ligase of Staphylococcus carnosus (strain TM300).